The primary structure comprises 475 residues: Doublecortin domain-containing protein 2 (475 aa).

Doublecortin domains are found at residues 17–100 (KSVL…LNYL) and 139–221 (CTIF…LPYS). The disordered stretch occupies residues 234–475 (YGQKASSLPP…EANKASSAVA (242 aa)). The segment covering 252-272 (GSGNYRQSKSTIGSSDNSSPQ) has biased composition (polar residues). Ser270 carries the phosphoserine modification. The span at 353 to 365 (EKTSKDANQKEDF) shows a compositional bias: basic and acidic residues. The segment covering 407-425 (TDEENGEELDQVAEELQPT) has biased composition (acidic residues).

In terms of assembly, interacts with DVL1, DVL2 and DVL3. Expressed in hair cells of the inner ear.

Its subcellular location is the cell projection. The protein resides in the cilium. It is found in the cytoplasm. The protein localises to the cytoskeleton. It localises to the cilium axoneme. Its subcellular location is the kinocilium. In terms of biological role, protein that plays a role in the inhibition of canonical Wnt signaling pathway. May be involved in neuronal migration during development of the cerebral neocortex. Involved in the control of ciliogenesis and ciliary length. In Mus musculus (Mouse), this protein is Doublecortin domain-containing protein 2 (Dcdc2).